Consider the following 977-residue polypeptide: Vacuolar membrane protease (977 aa).

The Cytoplasmic segment spans residues 1-17 (MARSRTAGRCNPFAFYR). Residues 18 to 38 (VPVTVFVTLIYVALLAPIIVV) traverse the membrane as a helical segment. The Vacuolar segment spans residues 39-383 (HHILPAVPES…AFAVFEIHTL (345 aa)). Residues N113 and N116 are each glycosylated (N-linked (GlcNAc...) asparagine). Residues H166 and D178 each coordinate Zn(2+). E212 functions as the Proton acceptor in the catalytic mechanism. Zn(2+)-binding residues include E213, E238, and H311. The chain crosses the membrane as a helical span at residues 384–404 (FALSVTLLIVGPLTLFITSII). The Cytoplasmic segment spans residues 405–438 (LANQDRMYLFGISVPVDDGFGSVPLRGWRGFFRF). Residues 439–459 (PFIFGSTTASVVALAYLMAKI) traverse the membrane as a helical segment. Residues 460–469 (NPMIAHSSEY) are Vacuolar-facing. The helical transmembrane segment at 470-490 (AVWSMMISAWVFVAWFLSRIA) threads the bilayer. Residues 491 to 500 (NFARPSALHR) are Cytoplasmic-facing. A helical transmembrane segment spans residues 501-521 (IYVLTWMFLLTWVLLVITTVY). The Vacuolar segment spans residues 522–525 (ENRD). Residues 526–546 (GIASGYFVIFYAFGTFMATWI) form a helical membrane-spanning segment. The Cytoplasmic segment spans residues 547–659 (SYLELFSLPK…WSANLPKWTW (113 aa)). Residues 566 to 576 (GQISSRPTSLG) show a composition bias toward polar residues. A disordered region spans residues 566–604 (GQISSRPTSLGGSRLLTPSGESVGQHPEDEEPTESTSLL). The helical transmembrane segment at 660-680 (ILQFLLIAPIVIILIGQLGLL) threads the bilayer. Topologically, residues 681–696 (ITSAIHQTMQDGSSTL) are vacuolar. The helical transmembrane segment at 697 to 717 (VPYLIIALLTTFLFMPTLPFI) threads the bilayer. The Cytoplasmic portion of the chain corresponds to 718-726 (HRYTYHIPT). A helical membrane pass occupies residues 727–747 (FLFLIFVATLVYNLVAFPFSG). At 748-977 (NNRTKLFFLQ…LVKGSRSFEV (230 aa)) the chain is on the vacuolar side. Residues N749 and N791 are each glycosylated (N-linked (GlcNAc...) asparagine).

Belongs to the peptidase M28 family. Zn(2+) serves as cofactor.

Its subcellular location is the vacuole membrane. Functionally, may be involved in vacuolar sorting and osmoregulation. The polypeptide is Vacuolar membrane protease (Talaromyces marneffei (strain ATCC 18224 / CBS 334.59 / QM 7333) (Penicillium marneffei)).